Consider the following 200-residue polypeptide: Ribonuclease HII (200 aa).

An RNase H type-2 domain is found at 11-200 (QSIAGVDEVG…VRRALISLTG (190 aa)). Asp-17, Glu-18, and Asp-109 together coordinate a divalent metal cation.

The protein belongs to the RNase HII family. It depends on Mn(2+) as a cofactor. Mg(2+) serves as cofactor.

It is found in the cytoplasm. The catalysed reaction is Endonucleolytic cleavage to 5'-phosphomonoester.. Functionally, endonuclease that specifically degrades the RNA of RNA-DNA hybrids. This is Ribonuclease HII from Hamiltonella defensa subsp. Acyrthosiphon pisum (strain 5AT).